We begin with the raw amino-acid sequence, 215 residues long: Kunitz trypsin inhibitor 4 (215 aa).

An N-terminal signal peptide occupies residues 1 to 28; sequence MTKTTKTMNPKFYLVLALTAVLASNAYG. 2 disulfides stabilise this stretch: cysteine 66–cysteine 112 and cysteine 165–cysteine 176. A glycan (N-linked (GlcNAc...) asparagine) is linked at asparagine 206.

The protein belongs to the protease inhibitor I3 (leguminous Kunitz-type inhibitor) family. In terms of tissue distribution, expressed in roots.

The protein localises to the endoplasmic reticulum. Its function is as follows. Exhibits Kunitz trypsin protease inhibitor activity. Involved in modulating programmed cell death (PCD) in plant-pathogen interactions. Can inhibit both serine proteases and cysteine proteases. May be involved in the modulation of the proteases that participate in the hydrolysis of dietary proteins in the gut of spider mites. In Arabidopsis thaliana (Mouse-ear cress), this protein is Kunitz trypsin inhibitor 4.